Consider the following 658-residue polypeptide: Probable rhamnogalacturonate lyase B (658 aa).

An N-terminal signal peptide occupies residues 1–19 (MRFAIPLGAACAWAGVALA). 10 N-linked (GlcNAc...) asparagine glycosylation sites follow: N110, N143, N239, N280, N522, N530, N564, N571, N592, and N633.

This sequence belongs to the polysaccharide lyase 4 family.

It is found in the secreted. The catalysed reaction is Endotype eliminative cleavage of L-alpha-rhamnopyranosyl-(1-&gt;4)-alpha-D-galactopyranosyluronic acid bonds of rhamnogalacturonan I domains in ramified hairy regions of pectin leaving L-rhamnopyranose at the reducing end and 4-deoxy-4,5-unsaturated D-galactopyranosyluronic acid at the non-reducing end.. Pectinolytic enzymes consist of four classes of enzymes: pectin lyase, polygalacturonase, pectin methylesterase and rhamnogalacturonase. Degrades the rhamnogalacturonan I (RG-I) backbone of pectin. In Neosartorya fischeri (strain ATCC 1020 / DSM 3700 / CBS 544.65 / FGSC A1164 / JCM 1740 / NRRL 181 / WB 181) (Aspergillus fischerianus), this protein is Probable rhamnogalacturonate lyase B (rglB).